Reading from the N-terminus, the 477-residue chain is Phosphatidylinositol 4-kinase type 2-beta (477 aa).

The interval 1 to 80 is disordered; that stretch reads MPEPPRDIMA…EDRSISASLS (80 aa). Residue Ser-45 is modified to Phosphoserine. Residues 116–447 enclose the PI3K/PI4K catalytic domain; sequence GVFPERISQG…AQMPCVIVEC (332 aa). The segment at 122–128 is G-loop; that stretch reads ISQGSSG. The ATP site is built by Ser-129 and Lys-144. An important for substrate binding region spans residues 149-151; sequence EPY. Residues 157 to 170 are important for interaction with membranes; sequence KWTKYVHKVCCPCC. ATP-binding positions include 253-256 and 267-268; these read QLFV and RR. The important for interaction with membranes stretch occupies residues 260–268; it reads KEAEYWLRR. Positions 297-305 are catalytic loop; sequence RNTDRGNDN. The tract at residues 338 to 358 is activation loop; the sequence is AIDNGLAFPFKHPDEWRAYPF. Asp-340 is an ATP binding site. Residues 353–362 form an important for interaction with membranes region; that stretch reads WRAYPFHWAW.

Belongs to the PI3/PI4-kinase family. Type II PI4K subfamily.

The protein localises to the cytoplasm. It localises to the cytosol. Its subcellular location is the golgi apparatus membrane. The protein resides in the endoplasmic reticulum membrane. It is found in the cell membrane. The protein localises to the early endosome membrane. The catalysed reaction is a 1,2-diacyl-sn-glycero-3-phospho-(1D-myo-inositol) + ATP = a 1,2-diacyl-sn-glycero-3-phospho-(1D-myo-inositol 4-phosphate) + ADP + H(+). In terms of biological role, together with PI4K2A and the type III PI4Ks (PIK4CA and PIK4CB) it contributes to the overall PI4-kinase activity of the cell. This contribution may be especially significant in plasma membrane, endosomal and Golgi compartments. The phosphorylation of phosphatidylinositol (PI) to PI4P is the first committed step in the generation of phosphatidylinositol 4,5-bisphosphate (PIP2), a precursor of the second messenger inositol 1,4,5-trisphosphate (InsP3). Contributes to the production of InsP3 in stimulated cells and is likely to be involved in the regulation of vesicular trafficking. This Rattus norvegicus (Rat) protein is Phosphatidylinositol 4-kinase type 2-beta (Pi4k2b).